Here is a 342-residue protein sequence, read N- to C-terminus: Apurinic-apyrimidinic endonuclease 1 (342 aa).

Residues His61, Glu136, Asp170, His173, His207, Asp220, His222, and Glu252 each contribute to the Zn(2+) site. Over residues His299–Lys310 the composition is skewed to basic and acidic residues. The interval His299–Glu342 is disordered.

Belongs to the AP endonuclease 2 family. Zn(2+) serves as cofactor.

It localises to the nucleus. Functionally, DNA repair enzyme that cleaves apurinic/apyrimidinic (AP) sites and removes 3'-blocking groups present at single strand breaks of damaged DNA. Provides back-up AP endonuclease (APE) activity to apn2 together with uve1. The polypeptide is Apurinic-apyrimidinic endonuclease 1 (apn1) (Schizosaccharomyces pombe (strain 972 / ATCC 24843) (Fission yeast)).